A 283-amino-acid chain; its full sequence is Pantothenate synthetase (283 aa).

30 to 37 (MGYFHEGH) is a binding site for ATP. Residue histidine 37 is the Proton donor of the active site. Glutamine 61 contributes to the (R)-pantoate binding site. Residue glutamine 61 coordinates beta-alanine. Position 147-150 (147-150 (GEKD)) interacts with ATP. Glutamine 153 contacts (R)-pantoate. ATP is bound by residues valine 176 and 184-187 (MSSR).

This sequence belongs to the pantothenate synthetase family. In terms of assembly, homodimer.

It localises to the cytoplasm. It carries out the reaction (R)-pantoate + beta-alanine + ATP = (R)-pantothenate + AMP + diphosphate + H(+). It participates in cofactor biosynthesis; (R)-pantothenate biosynthesis; (R)-pantothenate from (R)-pantoate and beta-alanine: step 1/1. Catalyzes the condensation of pantoate with beta-alanine in an ATP-dependent reaction via a pantoyl-adenylate intermediate. This Syntrophobacter fumaroxidans (strain DSM 10017 / MPOB) protein is Pantothenate synthetase.